A 330-amino-acid polypeptide reads, in one-letter code: Phosphate acyltransferase (330 aa).

This sequence belongs to the PlsX family. As to quaternary structure, homodimer. Probably interacts with PlsY.

It localises to the cytoplasm. It carries out the reaction a fatty acyl-[ACP] + phosphate = an acyl phosphate + holo-[ACP]. The protein operates within lipid metabolism; phospholipid metabolism. Functionally, catalyzes the reversible formation of acyl-phosphate (acyl-PO(4)) from acyl-[acyl-carrier-protein] (acyl-ACP). This enzyme utilizes acyl-ACP as fatty acyl donor, but not acyl-CoA. The sequence is that of Phosphate acyltransferase from Lactobacillus delbrueckii subsp. bulgaricus (strain ATCC BAA-365 / Lb-18).